A 446-amino-acid chain; its full sequence is Keratin, type I cytoskeletal 25 (446 aa).

The interval 1–74 is head; the sequence is MSLRLSSGSR…VNEGGLLSGN (74 aa). The interval 75-110 is coil 1A; sequence EKVTMQNLNDRLASYLDNVQALQEANADLEQKIKGW. The 316-residue stretch at 75–390 folds into the IF rod domain; that stretch reads EKVTMQNLND…LLIGGDEGAC (316 aa). Positions 111–132 are linker 1; that stretch reads YEKFGPGSCRGLDHDYSRYFPI. Residues 133 to 224 are coil 1B; the sequence is IDDLKNQIIT…KNHKEEMQAL (92 aa). A linker 12 region spans residues 225-247; it reads QCAAGGNVNVEMNAAPGVDLTVL. Positions 248–386 are coil 2; that stretch reads LNNMRAEYEA…ETYCLLIGGD (139 aa). Residues 387–446 form a tail region; that stretch reads EGACKSSSYKSKDYGSGNAGNQIKDPVKAIVVKKVLEEVDQRSKILTTRLHSLEEKSQSN. Residue S438 is modified to Phosphoserine.

Belongs to the intermediate filament family. Heterodimer of a type I and a type II keratin. Heterodimer with type II keratin KRT5 leading to the formation of keratin intermediate filament (KIF) network. Interacts with KRT6A to form filaments.

Its subcellular location is the cytoplasm. Essential for the proper assembly of type I and type II keratin protein complexes and formation of keratin intermediate filaments in the inner root sheath (irs). Plays a role in the cytoskeleton organization. This chain is Keratin, type I cytoskeletal 25, found in Mus musculus (Mouse).